The primary structure comprises 226 residues: MNPILTNRLQKKLGYTFQQHDLLLQALTHRSASSKHNERLEFLGDSILSYVIANALYQRFPRVDEGDMSRMRATLVRGNTLAEMAREFELGECLRLGPGELKSGGFRRESILADTVEALIGGVFLDSDIRTVEKLILDWYRSRLDEISPGDKQKDPKTRLQEYLQGRHLPLPTYQVVQVRGEAHDQEFTIHCQVSGLAQPVVGNGSSRRKAEQAAAEQALKLLELE.

An RNase III domain is found at 6 to 128 (TNRLQKKLGY…LIGGVFLDSD (123 aa)). Glu41 is a Mg(2+) binding site. Residue Asp45 is part of the active site. 2 residues coordinate Mg(2+): Asp114 and Glu117. Glu117 is a catalytic residue. The DRBM domain maps to 155-225 (DPKTRLQEYL…AEQALKLLEL (71 aa)).

The protein belongs to the ribonuclease III family. As to quaternary structure, homodimer. Requires Mg(2+) as cofactor.

Its subcellular location is the cytoplasm. It catalyses the reaction Endonucleolytic cleavage to 5'-phosphomonoester.. In terms of biological role, digests double-stranded RNA. Involved in the processing of primary rRNA transcript to yield the immediate precursors to the large and small rRNAs (23S and 16S). Processes some mRNAs, and tRNAs when they are encoded in the rRNA operon. Processes pre-crRNA and tracrRNA of type II CRISPR loci if present in the organism. This Sodalis glossinidius (strain morsitans) protein is Ribonuclease 3.